We begin with the raw amino-acid sequence, 540 residues long: Glucose-6-phosphate isomerase (540 aa).

Glu346 functions as the Proton donor in the catalytic mechanism. Active-site residues include His377 and Lys505.

The protein belongs to the GPI family.

The protein localises to the cytoplasm. The enzyme catalyses alpha-D-glucose 6-phosphate = beta-D-fructose 6-phosphate. Its pathway is carbohydrate biosynthesis; gluconeogenesis. It functions in the pathway carbohydrate degradation; glycolysis; D-glyceraldehyde 3-phosphate and glycerone phosphate from D-glucose: step 2/4. Its function is as follows. Catalyzes the reversible isomerization of glucose-6-phosphate to fructose-6-phosphate. This is Glucose-6-phosphate isomerase from Francisella philomiragia subsp. philomiragia (strain ATCC 25017 / CCUG 19701 / FSC 153 / O#319-036).